The chain runs to 128 residues: Large ribosomal subunit protein bL12 (128 aa).

In terms of assembly, homodimer. Part of the 50S ribosomal subunit; present in 6 copies per ribosome. Forms part of the ribosomal stalk which helps the ribosome interact with GTP-bound translation factors. Forms a heptameric L10(L12)2(L12)2(L12)2 complex, where L10 forms an elongated spine to which 3 L12 dimers bind in a sequential fashion.

Functionally, forms part of the ribosomal stalk which helps the ribosome interact with GTP-bound translation factors. Is thus essential for accurate translation. The chain is Large ribosomal subunit protein bL12 from Thermotoga maritima (strain ATCC 43589 / DSM 3109 / JCM 10099 / NBRC 100826 / MSB8).